We begin with the raw amino-acid sequence, 80 residues long: WAP four-disulfide core domain protein 15A (80 aa).

The first 20 residues, 1-20 (MKPSSLLLFTTTILLCLSMA), serve as a signal peptide directing secretion. Residues 29-76 (VTPKQGYCPEFLLDCPFVLLPVCSRDKGCKGTKKCCFYYCQMRCVEPW) enclose the WAP domain. Cystine bridges form between Cys-36/Cys-64, Cys-43/Cys-68, Cys-51/Cys-63, and Cys-57/Cys-72.

It is found in the secreted. Functionally, antibacterial protein. The chain is WAP four-disulfide core domain protein 15A from Mus musculus (Mouse).